Consider the following 952-residue polypeptide: UPF0182 protein SRU_2225 (952 aa).

7 helical membrane-spanning segments follow: residues 12–32 (ILLG…GLVV), 52–72 (AQVL…GGNF), 109–129 (LGYV…SGRW), 168–188 (AVVG…VIAG), 207–227 (LGAN…LDLY), 247–267 (VVIP…GLVG), and 277–297 (LLGI…VLAP). The disordered stretch occupies residues 917–952 (VPLPDTTGTVPPPTSSDTTGTMTAPTGDVSEVTGGS). Polar residues predominate over residues 931–940 (SSDTTGTMTA).

This sequence belongs to the UPF0182 family.

Its subcellular location is the cell membrane. In Salinibacter ruber (strain DSM 13855 / M31), this protein is UPF0182 protein SRU_2225.